The chain runs to 25 residues: Xenoposin precursor fragment BM1 (25 aa).

In terms of tissue distribution, expressed by the skin glands.

Its subcellular location is the secreted. Functionally, antimicrobial peptide. The chain is Xenoposin precursor fragment BM1 from Xenopus boumbaensis (Mawa clawed frog).